The chain runs to 430 residues: Tektin-2 (430 aa).

Coiled coils occupy residues 82 to 160 (LTDL…QAFE) and 273 to 379 (EKVY…DIAC).

The protein belongs to the tektin family. Microtubule inner protein component of sperm flagellar doublet microtubules. May interact with CCDC172. In terms of processing, tyrosine phosphorylated. Ubiquitinated, leading to its degradation. Deubiquitinated by USP16, promoting its stability.

The protein localises to the cytoplasm. Its subcellular location is the cytoskeleton. The protein resides in the cilium axoneme. It localises to the flagellum axoneme. It is found in the microtubule organizing center. Microtubule inner protein (MIP) part of the dynein-decorated doublet microtubules (DMTs) in cilia and flagellar axoneme. Plays a key role in the assembly or attachment of the inner dynein arm to microtubules in sperm flagella and tracheal cilia. Forms filamentous polymers in the walls of ciliary and flagellar microtubules. This chain is Tektin-2 (TEKT2), found in Macaca fascicularis (Crab-eating macaque).